The following is a 505-amino-acid chain: ATP synthase subunit alpha (505 aa).

171-178 (GDRQTGKT) contributes to the ATP binding site.

It belongs to the ATPase alpha/beta chains family. F-type ATPases have 2 components, CF(1) - the catalytic core - and CF(0) - the membrane proton channel. CF(1) has five subunits: alpha(3), beta(3), gamma(1), delta(1), epsilon(1). CF(0) has three main subunits: a(1), b(2) and c(9-12). The alpha and beta chains form an alternating ring which encloses part of the gamma chain. CF(1) is attached to CF(0) by a central stalk formed by the gamma and epsilon chains, while a peripheral stalk is formed by the delta and b chains.

The protein resides in the cell inner membrane. The catalysed reaction is ATP + H2O + 4 H(+)(in) = ADP + phosphate + 5 H(+)(out). In terms of biological role, produces ATP from ADP in the presence of a proton gradient across the membrane. The alpha chain is a regulatory subunit. This Campylobacter fetus subsp. fetus (strain 82-40) protein is ATP synthase subunit alpha.